A 263-amino-acid chain; its full sequence is Hemophilin (263 aa).

The signal sequence occupies residues 1 to 20 (MKISQLFLGLVACSTAFAYA). His-42, Tyr-58, Ser-104, and His-105 together coordinate heme b.

In terms of assembly, monomer in solution. Interacts with host hemoglobin.

Its subcellular location is the secreted. Its function is as follows. Part of a high affinity heme acquisition system. Functions as a hemophore that acquires heme from human hemoglobin and delivers the heme to its cognate receptor, HphR, facilitating transport of heme across the bacterial outer membrane. Apo HphA interacts specifically with human hemoglobin and steals heme through a passive process probably due to its high affinity for heme. It can also acquire heme complexed to human serum albumin. Plays a supporting role for full virulence, acting as an accessory factor that enhances the process of heme uptake. In Acinetobacter baumannii, this protein is Hemophilin.